Here is a 370-residue protein sequence, read N- to C-terminus: 3-dehydroquinate synthase (370 aa).

NAD(+) contacts are provided by residues 112–116 (GVIGD), 136–137 (TT), K149, K158, and 176–179 (TLAT). Residues E191, H254, and H276 each contribute to the Zn(2+) site.

This sequence belongs to the sugar phosphate cyclases superfamily. Dehydroquinate synthase family. Co(2+) is required as a cofactor. Requires Zn(2+) as cofactor. The cofactor is NAD(+).

The protein resides in the cytoplasm. The enzyme catalyses 7-phospho-2-dehydro-3-deoxy-D-arabino-heptonate = 3-dehydroquinate + phosphate. It participates in metabolic intermediate biosynthesis; chorismate biosynthesis; chorismate from D-erythrose 4-phosphate and phosphoenolpyruvate: step 2/7. Its function is as follows. Catalyzes the conversion of 3-deoxy-D-arabino-heptulosonate 7-phosphate (DAHP) to dehydroquinate (DHQ). The chain is 3-dehydroquinate synthase from Xylella fastidiosa (strain M23).